Here is an 832-residue protein sequence, read N- to C-terminus: MGKKSKVGKSRRDKFYHLAKETGFRSRSAFKLLQLNRKFQFLQKARALLDLCAAPGGWLQVASKFMPVSSLVIGVDLVPIKPIPNVVTLQEDITTEKCRQALRKELQTWKVDVVLNDGAPNVGASWVHDAYSQANLTLMALKLACEFLCKGGWFITKVFRSRDYQPLLWIFQQFFHKVQATKPQASRNESAEIFVVCQGYQAPDKIDSKFFDPKYAFKEVEVHAKSVSELVSKKKPKAEGYADGDTTLYHRFTLMDFLKAPNPVDFLSKANEITLGDGELENHSSTTEELRQCCKDIRVLGRKELRALLNWRTKLRRFLTKKLKEQAKELDINLSSGEEEEGREEEEKTSPKAAADEMVKEEEEEVELALAEMKAKELAELKRKKKKILKEQRKQRERVELKMDLPGVSIADDGDTSMFSLQTIQRTQLLNEVARGDMASADALLEMRPGDDDICVSDADDEDDVSLASDLDPEELVEIEARQRRLERERREQGVKRVKPKVEEEEEEEEEEENPLLVPLEEKSVLQERQTSLWFGKDAFAGIEDDADEDLELGQSQMLAERQRESQTGKTKKKGQKKKVPQESTAAEPQDAADTGADTAEAEAEQSSDDDSSSDEEGPPTPVGRKRGLVEPCGFEVVPIEDPVKKARVLDAEGLALGSVIATSKKAKRDLIDDSFNRYSFNEEEGELPEWFTEEEKQHRRKQIPLDKQTVEEYRQRWRQINARPIKKVAEAKARKKRRMLKKMEQMKKKAEAVVSTVDISEREKVAQLRRIYKKAGLGKEKRQVTYLVAKKGVGPRVRRPPGVKGQFKVVDSRLKKDVRAQKRKEQKKRRK.

Positions 56, 58, 76, 92, and 117 each coordinate S-adenosyl-L-methionine. Lys-157 (proton acceptor) is an active-site residue. Disordered regions lie at residues 332-358 (INLS…ADEM), 485-523 (RLER…LEEK), and 546-631 (DADE…GLVE). Basic and acidic residues-rich tracts occupy residues 345–358 (EEEK…ADEM) and 485–495 (RLERERREQGV). The segment covering 503–514 (EEEEEEEEEEEN) has biased composition (acidic residues). The segment covering 570–579 (KTKKKGQKKK) has biased composition (basic residues). A compositionally biased stretch (acidic residues) spans 600–618 (AEAEAEQSSDDDSSSDEEG). Positions 726 to 758 (IKKVAEAKARKKRRMLKKMEQMKKKAEAVVSTV) form a coiled coil. Residues 795-832 (GPRVRRPPGVKGQFKVVDSRLKKDVRAQKRKEQKKRRK) are disordered. The segment covering 811–821 (VDSRLKKDVRA) has biased composition (basic and acidic residues). The span at 822–832 (QKRKEQKKRRK) shows a compositional bias: basic residues.

This sequence belongs to the class I-like SAM-binding methyltransferase superfamily. RNA methyltransferase RlmE family. SPB1 subfamily. Interacts with NIP7.

The protein localises to the nucleus. The protein resides in the nucleolus. It catalyses the reaction a ribonucleotide in rRNA + S-adenosyl-L-methionine = a 2'-O-methylribonucleotide in rRNA + S-adenosyl-L-homocysteine + H(+). RNA 2'-O-methyltransferase involved in the processing of the 34S pre-rRNA to 18S rRNA and in 40S ribosomal subunit formation. The protein is pre-rRNA 2'-O-ribose RNA methyltransferase FTSJ3 of Gallus gallus (Chicken).